The primary structure comprises 409 residues: Sperm equatorial segment protein 1 (409 aa).

The signal sequence occupies residues 1-18 (MKPVVLVALLWLWPSSFL). N-linked (GlcNAc...) asparagine glycosylation occurs at N132. The segment at 141–223 (EPYIEKEPEP…TTNTQGTPNT (83 aa)) is disordered. Acidic residues predominate over residues 167–177 (PEPEPESESAP). A compositionally biased stretch (polar residues) spans 198 to 208 (NKVRTGTSRMS). Positions 209-223 (TVITQTTNTQGTPNT) are enriched in low complexity.

This sequence belongs to the SPESP1 family. Glycosylated. In testis there are two predominant forms of 77- and 67-kDa and a form of 47-kDa, whereas in epididymal sperm from caput, corpus, and cauda there are two forms of 47- and 43-kDa. Testis forms contain complex carbohydrate residues. Epididymal sperm forms are N-glycosylated. Then undergoes significant glycosylation in the testis and that the majority of these glycoconjugates are removed by the time sperm reach the caput epididymis.

The protein localises to the cytoplasmic vesicle. It localises to the secretory vesicle. The protein resides in the acrosome. In terms of biological role, involved in fertilization ability of sperm. The chain is Sperm equatorial segment protein 1 from Rattus norvegicus (Rat).